A 393-amino-acid chain; its full sequence is Protein TsgA (393 aa).

12 helical membrane-spanning segments follow: residues 11 to 31, 51 to 71, 78 to 98, 101 to 121, 134 to 154, 162 to 182, 206 to 226, 245 to 265, 273 to 293, 298 to 318, 332 to 352, and 361 to 381; these read WISF…GMVM, FLNA…EIVP, FGFI…SLAL, AAMF…TFLI, LLFT…VAAF, WYWV…LTFG, IGVL…LGFI, ALVS…SFIL, ILTV…TGTQ, WFIL…ITLG, FILT…GPIV, and LLTA…LGFV.

Belongs to the major facilitator superfamily. TsgA family.

The protein localises to the cell inner membrane. The chain is Protein TsgA from Salmonella gallinarum (strain 287/91 / NCTC 13346).